Here is a 121-residue protein sequence, read N- to C-terminus: ATP synthase epsilon chain (121 aa).

The protein belongs to the ATPase epsilon chain family. In terms of assembly, F-type ATPases have 2 components, CF(1) - the catalytic core - and CF(0) - the membrane proton channel. CF(1) has five subunits: alpha(3), beta(3), gamma(1), delta(1), epsilon(1). CF(0) has three main subunits: a, b and c.

It localises to the cell membrane. Its function is as follows. Produces ATP from ADP in the presence of a proton gradient across the membrane. The polypeptide is ATP synthase epsilon chain (Mycolicibacterium vanbaalenii (strain DSM 7251 / JCM 13017 / BCRC 16820 / KCTC 9966 / NRRL B-24157 / PYR-1) (Mycobacterium vanbaalenii)).